The sequence spans 185 residues: Large ribosomal subunit protein uL5 (185 aa).

The protein belongs to the universal ribosomal protein uL5 family. In terms of assembly, part of the 50S ribosomal subunit; part of the 5S rRNA/L5/L18/L25 subcomplex. Contacts the 5S rRNA and the P site tRNA. Forms a bridge to the 30S subunit in the 70S ribosome.

In terms of biological role, this is one of the proteins that bind and probably mediate the attachment of the 5S RNA into the large ribosomal subunit, where it forms part of the central protuberance. In the 70S ribosome it contacts protein S13 of the 30S subunit (bridge B1b), connecting the 2 subunits; this bridge is implicated in subunit movement. Contacts the P site tRNA; the 5S rRNA and some of its associated proteins might help stabilize positioning of ribosome-bound tRNAs. This Nitrobacter hamburgensis (strain DSM 10229 / NCIMB 13809 / X14) protein is Large ribosomal subunit protein uL5.